We begin with the raw amino-acid sequence, 101 residues long: Urease subunit beta (101 aa).

This sequence belongs to the urease beta subunit family. Heterotrimer of UreA (gamma), UreB (beta) and UreC (alpha) subunits. Three heterotrimers associate to form the active enzyme.

The protein resides in the cytoplasm. The enzyme catalyses urea + 2 H2O + H(+) = hydrogencarbonate + 2 NH4(+). The protein operates within nitrogen metabolism; urea degradation; CO(2) and NH(3) from urea (urease route): step 1/1. This is Urease subunit beta from Burkholderia thailandensis (strain ATCC 700388 / DSM 13276 / CCUG 48851 / CIP 106301 / E264).